The chain runs to 291 residues: MKHLIRTDDFTTQEIESILADAELFSDGRFDRILRDKIIITLFFENSTRTRSSFEIAAKRLGAEIVHLDVANSSTKKGETLVDTAMNLDAMGPHAIIVRHQNSGVAKILSNHTKASIINAGDGAHAHPTQALLDLFTLKKHFKNLEGKKIAIVGDIKNSRVANSNIELLSRFKMEVILVAPPQFLPQSDLRTTHYLEDIIDEVDAIMSLRTQTERHSSQTYASLKDYASDFCITSEVVGDRDIIILHPGPVHRNIDICDALLADKRCKVLEQVANGVAIRMAVLKKLIYDV.

Residues Arg49 and Thr50 each coordinate carbamoyl phosphate. L-aspartate is bound at residue Lys77. Carbamoyl phosphate-binding residues include Arg99, His127, and Gln130. L-aspartate contacts are provided by Arg160 and Arg210. Carbamoyl phosphate is bound by residues Gly249 and Pro250.

Belongs to the aspartate/ornithine carbamoyltransferase superfamily. ATCase family. Heterododecamer (2C3:3R2) of six catalytic PyrB chains organized as two trimers (C3), and six regulatory PyrI chains organized as three dimers (R2).

The enzyme catalyses carbamoyl phosphate + L-aspartate = N-carbamoyl-L-aspartate + phosphate + H(+). It functions in the pathway pyrimidine metabolism; UMP biosynthesis via de novo pathway; (S)-dihydroorotate from bicarbonate: step 2/3. In terms of biological role, catalyzes the condensation of carbamoyl phosphate and aspartate to form carbamoyl aspartate and inorganic phosphate, the committed step in the de novo pyrimidine nucleotide biosynthesis pathway. The sequence is that of Aspartate carbamoyltransferase catalytic subunit from Sulfurimonas denitrificans (strain ATCC 33889 / DSM 1251) (Thiomicrospira denitrificans (strain ATCC 33889 / DSM 1251)).